Reading from the N-terminus, the 349-residue chain is Phosphorylcholine phosphatase (349 aa).

A signal peptide spans 1–22; the sequence is MTFAKGILAALALAAAVGQASA. Asp-53 (nucleophile) is an active-site residue. Mg(2+) contacts are provided by Asp-53 and Asp-55. Catalysis depends on Asp-55, which acts as the Proton donor. Cys-109 and Cys-116 are joined by a disulfide. Residue Asp-284 participates in Mg(2+) binding.

It belongs to the HAD-like hydrolase superfamily. In terms of assembly, monomer. Homodimer. Homotetramer. Requires Mg(2+) as cofactor.

The protein localises to the periplasm. It carries out the reaction phosphocholine + H2O = choline + phosphate. The catalysed reaction is phosphoethanolamine + H2O = ethanolamine + phosphate. Its activity is regulated as follows. Activity is inhibited by high concentrations of phosphorylcholine, phosphorylethanolamine, choline or betaine. Displays different properties depending on the substrate utilized, the pH conditions as well as the presence or absence of metal ions. At pH 5, activity is inhibited by Al(3+) ions. At pH 7.4, the enzyme cannot catalyze the hydrolysis of pNPP, phosphorylethanolamine is a poor substrate in either the presence or absence of divalent cations, and activity measured with phosphorylcholine is independent of divalent cations or is not inhibited by Al(3+) ions. Mg(2+) produces identical activation at pH 5.0 and 7.4, but Zn(2+) is an activator at pH 5.0 and becomes an inhibitor at pH 7.4. This inhibition at pH 7.4 may be due to a transition from octahedral to tetrahedral coordination geometry, which is produced by hydrolysis of the Zn-hexacoordinated complex. Functionally, catalyzes the hydrolysis of phosphorylcholine (PCho) to produce choline and inorganic phosphate. Can also hydrolyze phosphorylethanolamine and the nonphysiological substrate p-nitrophenylphosphate (pNPP). Shows higher affinity and catalytic efficiency with phosphorylcholine as substrate. In terms of biological role, is probably involved in virulence. The bacteria may break down various host compounds or host cell membranes through the coordinated action of phospholipase C and phosphocholine phosphatase. The final consequence of the action of these enzymes is an increase of the free choline concentration, which may promote the pathogenicity of P.aeruginosa. The sequence is that of Phosphorylcholine phosphatase from Pseudomonas aeruginosa (strain ATCC 15692 / DSM 22644 / CIP 104116 / JCM 14847 / LMG 12228 / 1C / PRS 101 / PAO1).